Consider the following 222-residue polypeptide: Cytochrome b6 (222 aa).

The helical transmembrane segment at 39–59 (IFYCLGGITLVCFLIQFATGF) threads the bilayer. Cys-42 serves as a coordination point for heme c. 2 residues coordinate heme b: His-93 and His-107. 3 helical membrane-spanning segments follow: residues 97 to 117 (ASMMVLMMILHTFRVYLTGGF), 123 to 143 (LTWVTGVVMAVITVSFGVTGY), and 193 to 213 (LHTFVLPWFIAVFMLLHFLMI). Residues His-194 and His-209 each contribute to the heme b site.

It belongs to the cytochrome b family. PetB subfamily. As to quaternary structure, the 4 large subunits of the cytochrome b6-f complex are cytochrome b6, subunit IV (17 kDa polypeptide, PetD), cytochrome f and the Rieske protein, while the 4 small subunits are PetG, PetL, PetM and PetN. The complex functions as a dimer. It depends on heme b as a cofactor. The cofactor is heme c.

The protein resides in the cellular thylakoid membrane. Component of the cytochrome b6-f complex, which mediates electron transfer between photosystem II (PSII) and photosystem I (PSI), cyclic electron flow around PSI, and state transitions. The chain is Cytochrome b6 from Trichodesmium erythraeum (strain IMS101).